The primary structure comprises 295 residues: Ethanolamine ammonia-lyase small subunit (295 aa).

Residues Val207, Glu228, and Cys258 each coordinate adenosylcob(III)alamin.

This sequence belongs to the EutC family. In terms of assembly, the basic unit is a heterodimer which dimerizes to form tetramers. The heterotetramers trimerize; 6 large subunits form a core ring with 6 small subunits projecting outwards. Requires adenosylcob(III)alamin as cofactor.

The protein resides in the bacterial microcompartment. The catalysed reaction is ethanolamine = acetaldehyde + NH4(+). Its pathway is amine and polyamine degradation; ethanolamine degradation. Its function is as follows. Catalyzes the deamination of various vicinal amino-alcohols to oxo compounds. Allows this organism to utilize ethanolamine as the sole source of nitrogen and carbon in the presence of external vitamin B12. In Escherichia coli O139:H28 (strain E24377A / ETEC), this protein is Ethanolamine ammonia-lyase small subunit.